The following is a 295-amino-acid chain: Fatty acyl-CoA reductase (295 aa).

21–28 serves as a coordination point for NADP(+); sequence TGASSGIG. Ser-153 provides a ligand contact to substrate. The active-site Proton acceptor is Tyr-166.

This sequence belongs to the short-chain dehydrogenases/reductases (SDR) family.

It carries out the reaction hexadecanal + NADP(+) + CoA = hexadecanoyl-CoA + NADPH + H(+). In terms of biological role, catalyzes the NADPH-dependent reduction of long chain acyl-CoA (with chain lengths of 14 to 22 carbons) to the corresponding aldehyde. The protein is Fatty acyl-CoA reductase (acr1) of Acinetobacter baylyi (strain ATCC 33305 / BD413 / ADP1).